Here is a 50-residue protein sequence, read N- to C-terminus: Omwaprin-a (50 aa).

A WAP domain is found at 3–47 (RPKKPGLCPPRPQKPCVKECKNDDSCPGQQKCCNYGCKDECRDPI). Intrachain disulfides connect Cys10/Cys35, Cys18/Cys39, Cys22/Cys34, and Cys28/Cys43.

The protein belongs to the venom waprin family. As to expression, expressed by the venom gland.

It localises to the secreted. Damages membranes of susceptible bacteria. Has antibacterial activity against the Gram-positive bacteria B.megaterium and S.warneri. After a 45-minute treatment with this protein, B.megaterium have no visible pili and are smooth. Has no antibacterial activity against the Gram-positive bacteria B.thuringiensis, S.aureus, S.clavuligerus and B.anthracis, or the Gram-negative bacteria E.coli and A.tumefaciens. Has no hemolytic activity. Does not inhibit the proteinases elastase and cathepsin G. Is not toxic to mice. This is Omwaprin-a from Oxyuranus microlepidotus (Inland taipan).